A 501-amino-acid polypeptide reads, in one-letter code: GMP synthase [glutamine-hydrolyzing] (501 aa).

The Glutamine amidotransferase type-1 domain occupies 1 to 185; that stretch reads MVLVVDYGSQ…LFNVCKLEKN (185 aa). The active-site Nucleophile is the C75. Residues H159 and E161 contribute to the active site. A GMPS ATP-PPase domain is found at 186–376; the sequence is WKIGDLVEEK…LGIPDRIINR (191 aa). Position 213 to 219 (213 to 219) interacts with ATP; the sequence is SGGVDSS.

Homodimer.

The enzyme catalyses XMP + L-glutamine + ATP + H2O = GMP + L-glutamate + AMP + diphosphate + 2 H(+). It functions in the pathway purine metabolism; GMP biosynthesis; GMP from XMP (L-Gln route): step 1/1. Functionally, catalyzes the synthesis of GMP from XMP. This Thermotoga petrophila (strain ATCC BAA-488 / DSM 13995 / JCM 10881 / RKU-1) protein is GMP synthase [glutamine-hydrolyzing].